Consider the following 561-residue polypeptide: Dihydroxy-acid dehydratase (561 aa).

C51 provides a ligand contact to [2Fe-2S] cluster. D83 contacts Mg(2+). C124 is a binding site for [2Fe-2S] cluster. Mg(2+)-binding residues include D125 and K126. The residue at position 126 (K126) is an N6-carboxylysine. A [2Fe-2S] cluster-binding site is contributed by C196. A Mg(2+)-binding site is contributed by E448. Catalysis depends on S474, which acts as the Proton acceptor.

It belongs to the IlvD/Edd family. Homodimer. Requires [2Fe-2S] cluster as cofactor. Mg(2+) is required as a cofactor.

The catalysed reaction is (2R)-2,3-dihydroxy-3-methylbutanoate = 3-methyl-2-oxobutanoate + H2O. It catalyses the reaction (2R,3R)-2,3-dihydroxy-3-methylpentanoate = (S)-3-methyl-2-oxopentanoate + H2O. The protein operates within amino-acid biosynthesis; L-isoleucine biosynthesis; L-isoleucine from 2-oxobutanoate: step 3/4. It functions in the pathway amino-acid biosynthesis; L-valine biosynthesis; L-valine from pyruvate: step 3/4. Functionally, functions in the biosynthesis of branched-chain amino acids. Catalyzes the dehydration of (2R,3R)-2,3-dihydroxy-3-methylpentanoate (2,3-dihydroxy-3-methylvalerate) into 2-oxo-3-methylpentanoate (2-oxo-3-methylvalerate) and of (2R)-2,3-dihydroxy-3-methylbutanoate (2,3-dihydroxyisovalerate) into 2-oxo-3-methylbutanoate (2-oxoisovalerate), the penultimate precursor to L-isoleucine and L-valine, respectively. The protein is Dihydroxy-acid dehydratase of Pyrobaculum neutrophilum (strain DSM 2338 / JCM 9278 / NBRC 100436 / V24Sta) (Thermoproteus neutrophilus).